The sequence spans 341 residues: L-threonine 3-dehydrogenase (341 aa).

Position 38 (cysteine 38) interacts with Zn(2+). Active-site charge relay system residues include threonine 40 and histidine 43. Zn(2+) contacts are provided by histidine 63, glutamate 64, cysteine 93, cysteine 96, cysteine 99, and cysteine 107. Residues isoleucine 175, aspartate 195, arginine 200, 262-264 (LGI), and 286-287 (IY) contribute to the NAD(+) site.

This sequence belongs to the zinc-containing alcohol dehydrogenase family. In terms of assembly, homotetramer. Zn(2+) is required as a cofactor.

Its subcellular location is the cytoplasm. The enzyme catalyses L-threonine + NAD(+) = (2S)-2-amino-3-oxobutanoate + NADH + H(+). It functions in the pathway amino-acid degradation; L-threonine degradation via oxydo-reductase pathway; glycine from L-threonine: step 1/2. Its function is as follows. Catalyzes the NAD(+)-dependent oxidation of L-threonine to 2-amino-3-ketobutyrate. The sequence is that of L-threonine 3-dehydrogenase from Enterobacter sp. (strain 638).